The following is a 91-amino-acid chain: Large ribosomal subunit protein bL31B (91 aa).

This sequence belongs to the bacterial ribosomal protein bL31 family. Type B subfamily. In terms of assembly, part of the 50S ribosomal subunit.

The protein is Large ribosomal subunit protein bL31B of Neisseria meningitidis serogroup A / serotype 4A (strain DSM 15465 / Z2491).